The sequence spans 306 residues: UDP-3-O-acyl-N-acetylglucosamine deacetylase (306 aa).

Positions 79, 239, and 243 each coordinate Zn(2+). Catalysis depends on His266, which acts as the Proton donor.

This sequence belongs to the LpxC family. It depends on Zn(2+) as a cofactor.

It catalyses the reaction a UDP-3-O-[(3R)-3-hydroxyacyl]-N-acetyl-alpha-D-glucosamine + H2O = a UDP-3-O-[(3R)-3-hydroxyacyl]-alpha-D-glucosamine + acetate. It participates in glycolipid biosynthesis; lipid IV(A) biosynthesis; lipid IV(A) from (3R)-3-hydroxytetradecanoyl-[acyl-carrier-protein] and UDP-N-acetyl-alpha-D-glucosamine: step 2/6. Catalyzes the hydrolysis of UDP-3-O-myristoyl-N-acetylglucosamine to form UDP-3-O-myristoylglucosamine and acetate, the committed step in lipid A biosynthesis. This is UDP-3-O-acyl-N-acetylglucosamine deacetylase from Glaesserella parasuis serovar 5 (strain SH0165) (Haemophilus parasuis).